We begin with the raw amino-acid sequence, 273 residues long: DNA repair protein RecO (273 aa).

It belongs to the RecO family.

Its function is as follows. Involved in DNA repair and RecF pathway recombination. The sequence is that of DNA repair protein RecO from Mycolicibacterium gilvum (strain PYR-GCK) (Mycobacterium gilvum (strain PYR-GCK)).